The primary structure comprises 318 residues: NADH-ubiquinone oxidoreductase chain 1 (318 aa).

8 consecutive transmembrane segments (helical) span residues 2-22, 70-90, 100-120, 147-167, 171-191, 223-243, 253-273, and 294-314; these read FFIN…FLTL, MFIL…IPLP, LGVL…LWSG, AIIL…TLII, HMWL…STLA, FFLA…ILFF, ELYS…FLWI, and LPLT…TASI.

Belongs to the complex I subunit 1 family. As to quaternary structure, core subunit of respiratory chain NADH dehydrogenase (Complex I) which is composed of 45 different subunits.

The protein resides in the mitochondrion inner membrane. It carries out the reaction a ubiquinone + NADH + 5 H(+)(in) = a ubiquinol + NAD(+) + 4 H(+)(out). In terms of biological role, core subunit of the mitochondrial membrane respiratory chain NADH dehydrogenase (Complex I) which catalyzes electron transfer from NADH through the respiratory chain, using ubiquinone as an electron acceptor. Essential for the catalytic activity and assembly of complex I. This is NADH-ubiquinone oxidoreductase chain 1 (MT-ND1) from Canis lupus familiaris (Dog).